The following is a 428-amino-acid chain: Neuromedin-U receptor 1 (428 aa).

Residues 1–59 (MTPPCLNCSIFPGALSPNASRSPLVCNISEFKWPYQPEDLNLTDEALRLKYLGPQQMKQ) lie on the Extracellular side of the membrane. N-linked (GlcNAc...) asparagine glycosylation is found at N27 and N41. A helical transmembrane segment spans residues 60 to 80 (FVPICVTYLLIFVVGTLGNGL). The Cytoplasmic portion of the chain corresponds to 81 to 96 (TCTVILRNKTMRTPTN). The helical transmembrane segment at 97–117 (FYLFSLAVSDMLVLLVGLPLE) threads the bilayer. Residues 118-137 (LYEMQQNYPFQLGASACYFR) lie on the Extracellular side of the membrane. A disulfide bond links C134 and C219. A helical transmembrane segment spans residues 138–158 (ILLLETVCLASVLNVTALSVE). Over 159–181 (RYVAVVRPLQAKSVMTRAHVRRM) the chain is Cytoplasmic. A helical transmembrane segment spans residues 182–202 (VGAIWVLATLFSLPNTSLHGL). Residues 203 to 235 (SQLTVPCRGPVPDSAICSLVGPMDFYKLVVLTT) are Extracellular-facing. Residues 236 to 256 (ALLFFCLPMVTISVLYLLIGL) form a helical membrane-spanning segment. At 257 to 294 (RLRRERMLLQVEVKGRKTAATQETSHRRIQLQDRGRRQ) the chain is on the cytoplasmic side. The helical transmembrane segment at 295–315 (VTKMLFALVVVFGICWAPFHA) threads the bilayer. Topologically, residues 316–339 (DRIMWSLVYGHSTEGLHLAYQCVH) are extracellular. A helical membrane pass occupies residues 340 to 360 (IASGIFFYLGSAANPVLYSLM). Residues 361 to 428 (STRFRETFLQ…PGCQQETDPS (68 aa)) lie on the Cytoplasmic side of the membrane.

Belongs to the G-protein coupled receptor 1 family. As to expression, ubiquitously expressed.

The protein resides in the cell membrane. Functionally, receptor for the neuromedin-U and neuromedin-S neuropeptides. This chain is Neuromedin-U receptor 1 (Nmur1), found in Mus musculus (Mouse).